An 87-amino-acid chain; its full sequence is DNA polymerase epsilon subunit C (87 aa).

As to quaternary structure, DNA polymerase epsilon is a heterotetramer consisting of cdc20/Pol2, dpb2, dpb3, and dpb4. Also forms a heterodimer consisting dpb3 and dpb4. Interacts directly with cdc20/pol2 and dpb4.

It is found in the nucleus. In terms of biological role, as accessory component of the DNA polymerase epsilon (DNA polymerase II) participates in chromosomal DNA replication. It is required during synthesis of the leading and lagging DNA strands at the replication fork and binds at/or near replication origins and moves along DNA with the replication fork. It has 3'-5' proofreading exonuclease activity that correct errors arising during DNA replication. It is also involved in DNA synthesis during DNA repair. The dpb3-dpb4 dimer associates with histone deacetylases, chromatin remodelers, and histones and plays a crucial role in the inheritance of histone hypoacetylation and H3K9 methylation in heterochromatin. The dpb3-dpb4 dimer is also required for the recruitment of sir2 to heterochromatin. In Schizosaccharomyces pombe (strain 972 / ATCC 24843) (Fission yeast), this protein is DNA polymerase epsilon subunit C.